A 723-amino-acid chain; its full sequence is MPQHAMGDTHFLSLPKHLFTSTSSATDSGCDTPPSSRASPASLRSAHGTLGSSSQPLFEPQAEKRSSQTAREVQYVSSGPQNSLCGWQAFTPKCLQVFNTPKGFLFFLCAASFLQGMTVNGFINTVITSIERRFDLHSYQSGLIASSYDIAACLCLTFVSYFGGNGHKPRWLGWGVLVLGIGSLVFALPHFTAGRYEVEMDEGLGTGTCLTNQSHVECKDSASGLSNYRLIFMLGQLLHGVGATPLYTLGVTYLDENVKSSYSPIYIAIFYTAAILGPAAGYLIGGAMLNVYTEVGQRTELTTDSPLWVGAWWIGFLGTGIAAFLIAIPILGYPRQLPGSQRYVVMRAAETQQLKDHSRGAVSNPAFGKTVRDLPLSIWLLLRNPTFILLCLAGATEATLIAGMSTFGPKFFEAQFSLSASEAATLFGYLVVPAGGGGTLLGGFLVNKFKLRGSGIIRFCLFCTLTSLLAFFVFLMHCPNVHMAGVTTGYVGSLLPKGQLDLKAACNAIYCCQPKHYSPLCGSDGTMYYSPCYAGCPADAETDLGGQKVYRGCSCILEKASSGWGNATAGKCASTCQSKPFLLVLVFVVIIFTFLSSIPALTATLRCVSDRQRSFALGIQWIVVRTLGSIPGPIAFGWVIDKACLLWQDQCGHQGSCFVYENEAMSRYMLIAGLTFKVLGFLFFVAAYFLYKSPSVSSDGLEASLPSQSSASDSPTEQLQSNV.

At 1 to 102 (MPQHAMGDTH…KCLQVFNTPK (102 aa)) the chain is on the cytoplasmic side. The interval 23–64 (SSATDSGCDTPPSSRASPASLRSAHGTLGSSSQPLFEPQAEK) is disordered. A compositionally biased stretch (low complexity) spans 33–46 (PPSSRASPASLRSA). Phosphoserine is present on residues S39, S42, and S45. Residues 103 to 123 (GFLFFLCAASFLQGMTVNGFI) form a helical membrane-spanning segment. The Extracellular portion of the chain corresponds to 124–142 (NTVITSIERRFDLHSYQSG). A helical transmembrane segment spans residues 143-163 (LIASSYDIAACLCLTFVSYFG). Residues 164-169 (GNGHKP) are Cytoplasmic-facing. Residues 170–194 (RWLGWGVLVLGIGSLVFALPHFTAG) form a helical membrane-spanning segment. At 195–224 (RYEVEMDEGLGTGTCLTNQSHVECKDSASG) the chain is on the extracellular side. N-linked (GlcNAc...) asparagine glycosylation occurs at N212. Residues 225–255 (LSNYRLIFMLGQLLHGVGATPLYTLGVTYLD) form a helical membrane-spanning segment. At 256 to 274 (ENVKSSYSPIYIAIFYTAA) the chain is on the cytoplasmic side. A helical membrane pass occupies residues 275 to 295 (ILGPAAGYLIGGAMLNVYTEV). Residues 296-309 (GQRTELTTDSPLWV) lie on the Extracellular side of the membrane. A helical transmembrane segment spans residues 310-334 (GAWWIGFLGTGIAAFLIAIPILGYP). Residues 335–380 (RQLPGSQRYVVMRAAETQQLKDHSRGAVSNPAFGKTVRDLPLSIWL) lie on the Cytoplasmic side of the membrane. Residues 381-402 (LLRNPTFILLCLAGATEATLIA) form a helical membrane-spanning segment. Residues 403-422 (GMSTFGPKFFEAQFSLSASE) lie on the Extracellular side of the membrane. A helical transmembrane segment spans residues 423–446 (AATLFGYLVVPAGGGGTLLGGFLV). Over 447–450 (NKFK) the chain is Cytoplasmic. The chain crosses the membrane as a helical span at residues 451–473 (LRGSGIIRFCLFCTLTSLLAFFV). Over 474–582 (FLMHCPNVHM…ASTCQSKPFL (109 aa)) the chain is Extracellular. The Kazal-like domain maps to 500–557 (LDLKAACNAIYCCQPKHYSPLCGSDGTMYYSPCYAGCPADAETDLGGQKVYRGCSCIL). 2 cysteine pairs are disulfide-bonded: C506/C536 and C521/C555. N566 carries N-linked (GlcNAc...) asparagine glycosylation. The helical transmembrane segment at 583 to 605 (LVLVFVVIIFTFLSSIPALTATL) threads the bilayer. The Cytoplasmic portion of the chain corresponds to 606–614 (RCVSDRQRS). A helical membrane pass occupies residues 615-640 (FALGIQWIVVRTLGSIPGPIAFGWVI). Over 641-673 (DKACLLWQDQCGHQGSCFVYENEAMSRYMLIAG) the chain is Extracellular. The helical transmembrane segment at 674 to 691 (LTFKVLGFLFFVAAYFLY) threads the bilayer. Residues 692-723 (KSPSVSSDGLEASLPSQSSASDSPTEQLQSNV) are Cytoplasmic-facing. The tract at residues 700 to 723 (GLEASLPSQSSASDSPTEQLQSNV) is disordered. Residues 701–723 (LEASLPSQSSASDSPTEQLQSNV) are compositionally biased toward low complexity.

This sequence belongs to the organo anion transporter (TC 2.A.60) family.

The protein resides in the cell membrane. The enzyme catalyses 3,3',5-triiodo-L-thyronine(out) + L-glutamate(in) = 3,3',5-triiodo-L-thyronine(in) + L-glutamate(out). It carries out the reaction L-thyroxine(out) + L-glutamate(in) = L-thyroxine(in) + L-glutamate(out). The catalysed reaction is estrone 3-sulfate(out) + L-glutamate(in) = estrone 3-sulfate(in) + L-glutamate(out). It catalyses the reaction taurocholate(out) + L-glutamate(in) = taurocholate(in) + L-glutamate(out). The enzyme catalyses 3,3',5-triiodo-L-thyronine(out) = 3,3',5-triiodo-L-thyronine(in). It carries out the reaction L-thyroxine(out) = L-thyroxine(in). The catalysed reaction is 3,3',5'-triiodo-L-thyronine(out) = 3,3',5'-triiodo-L-thyronine(in). It catalyses the reaction estrone 3-sulfate(out) = estrone 3-sulfate(in). The enzyme catalyses 17beta-estradiol 17-O-(beta-D-glucuronate)(out) = 17beta-estradiol 17-O-(beta-D-glucuronate)(in). It carries out the reaction taurocholate(out) = taurocholate(in). The catalysed reaction is prostaglandin E2(out) = prostaglandin E2(in). Its function is as follows. Organic anion antiporter with apparent broad substrate specificity. Recognizes various substrates including thyroid hormones 3,3',5-triiodo-L-thyronine (T3), L-thyroxine (T4) and 3,3',5'-triiodo-L-thyronine (rT3), conjugated steroids such as estrone 3-sulfate and estradiol 17-beta glucuronide, bile acids such as taurocholate and prostanoids such as prostaglandin E2, likely operating in a tissue-specific manner. May be involved in uptake of metabolites from the circulation into organs such as kidney, liver or placenta. Possibly drives the selective transport of thyroid hormones and estrogens coupled to an outward glutamate gradient across the microvillous membrane of the placenta. The transport mechanism, its electrogenicity and potential tissue-specific counterions remain to be elucidated. This Mus musculus (Mouse) protein is Solute carrier organic anion transporter family member 4A1 (Slco4a1).